The primary structure comprises 167 residues: Epithelial membrane protein 2 (167 aa).

Residues 1 to 21 (MLVLLAFIIAFHITSAALLFI) form a helical membrane-spanning segment. Residues N44, N47, and N52 are each glycosylated (N-linked (GlcNAc...) asparagine). Helical transmembrane passes span 67 to 87 (TMIL…LQLF), 95 to 115 (FVLT…AASI), and 143 to 163 (YILA…YLIL).

This sequence belongs to the PMP-22/EMP/MP20 family. Interacts with PTK2; regulates PTK2 activation and localization. Interacts with ITGB3; regulates the levels of the heterodimer ITGA5-ITGB3 integrin surface expression. Interacts with P2RX7 (via C-terminus). Interacts with ITGB1; the interaction may be direct or indirect and ITGB1 has a heterodimer form.

It is found in the golgi apparatus membrane. Its subcellular location is the cell membrane. The protein resides in the apical cell membrane. The protein localises to the membrane raft. It localises to the cytoplasm. It is found in the nucleus. Its subcellular location is the perinuclear region. Functions as a key regulator of cell membrane composition by regulating protein surface expression. Also, plays a role in regulation of processes including cell migration, cell proliferation, cell contraction and cell adhesion. Regulates transepithelial migration of neutrophils into the alveolar lumen, potentially via mediation of cell surface expression of adhesion markers and lipid raft formation. Negatively regulates caveolae formation by reducing CAV1 expression and CAV1 amount by increasing lysosomal degradation. Facilitates surface trafficking and the formation of lipid rafts bearing GPI-anchor proteins. Regulates surface expression of MHC1 and ICAM1 proteins increasing susceptibility to T-cell mediated cytotoxicity. Regulates the plasma membrane expression of the integrin heterodimers ITGA6-ITGB1, ITGA5-ITGB3 and ITGA5-ITGB1 resulting in modulation of cell-matrix adhesion. Also regulates many processes through PTK2. Regulates blood vessel endothelial cell migration and angiogenesis by regulating VEGF protein expression through PTK2 activation. Regulates cell migration and cell contraction through PTK2 and SRC activation. Regulates focal adhesion density, F-actin conformation and cell adhesion capacity through interaction with PTK2. Positively regulates cell proliferation. Plays a role during cell death and cell blebbing. Promotes angiogenesis and vasculogenesis through induction of VEGFA via a HIF1A-dependent pathway. Also plays a role in embryo implantation by regulating surface trafficking of integrin heterodimer ITGA5-ITGB3. Plays a role in placental angiogenesis and uterine natural killer cell regulation at the maternal-fetal placental interface, however not required in the maternal tissues for a viable pregnancy. Involved in the early stages of embryogenic development and cardiogenesis, potentially via regulation of epithelial-mesenchymal transition timing. May play a role in glomerular filtration. In Pan troglodytes (Chimpanzee), this protein is Epithelial membrane protein 2 (EMP2).